We begin with the raw amino-acid sequence, 477 residues long: Ribulose bisphosphate carboxylase large chain (477 aa).

The propeptide occupies 1–2; it reads MS. The residue at position 3 (Pro-3) is an N-acetylproline. Substrate-binding residues include Asn-123 and Thr-173. The active-site Proton acceptor is the Lys-175. Lys-177 is a binding site for substrate. Lys-201, Asp-203, and Glu-204 together coordinate Mg(2+). Lys-201 carries the post-translational modification N6-carboxylysine. Residue His-294 is the Proton acceptor of the active site. Residues Arg-295, His-327, and Ser-379 each coordinate substrate.

The protein belongs to the RuBisCO large chain family. Type I subfamily. In terms of assembly, heterohexadecamer of 8 large chains and 8 small chains; disulfide-linked. The disulfide link is formed within the large subunit homodimers. Mg(2+) serves as cofactor. In terms of processing, the disulfide bond which can form between Cys-247 in the large chain dimeric partners within the hexadecamer appears to be associated with oxidative stress and protein turnover.

It is found in the plastid. It localises to the chloroplast. The enzyme catalyses 2 (2R)-3-phosphoglycerate + 2 H(+) = D-ribulose 1,5-bisphosphate + CO2 + H2O. It carries out the reaction D-ribulose 1,5-bisphosphate + O2 = 2-phosphoglycolate + (2R)-3-phosphoglycerate + 2 H(+). Functionally, ruBisCO catalyzes two reactions: the carboxylation of D-ribulose 1,5-bisphosphate, the primary event in carbon dioxide fixation, as well as the oxidative fragmentation of the pentose substrate in the photorespiration process. Both reactions occur simultaneously and in competition at the same active site. This Triticum aestivum (Wheat) protein is Ribulose bisphosphate carboxylase large chain (rbcL).